Here is a 94-residue protein sequence, read N- to C-terminus: MLNVNEYFAGKVKSIGFEGDSIGRASVGVMDAGEYTFGTGQPEEMTVITGALKVLLPGAPDWQVFTPGETFFVPGKSEFNLQVVEPTSYLCKYL.

The protein belongs to the nucleoside phosphorylase PpnP family.

The catalysed reaction is a purine D-ribonucleoside + phosphate = a purine nucleobase + alpha-D-ribose 1-phosphate. It catalyses the reaction adenosine + phosphate = alpha-D-ribose 1-phosphate + adenine. The enzyme catalyses cytidine + phosphate = cytosine + alpha-D-ribose 1-phosphate. It carries out the reaction guanosine + phosphate = alpha-D-ribose 1-phosphate + guanine. The catalysed reaction is inosine + phosphate = alpha-D-ribose 1-phosphate + hypoxanthine. It catalyses the reaction thymidine + phosphate = 2-deoxy-alpha-D-ribose 1-phosphate + thymine. The enzyme catalyses uridine + phosphate = alpha-D-ribose 1-phosphate + uracil. It carries out the reaction xanthosine + phosphate = alpha-D-ribose 1-phosphate + xanthine. In terms of biological role, catalyzes the phosphorolysis of diverse nucleosides, yielding D-ribose 1-phosphate and the respective free bases. Can use uridine, adenosine, guanosine, cytidine, thymidine, inosine and xanthosine as substrates. Also catalyzes the reverse reactions. In Pectobacterium atrosepticum (strain SCRI 1043 / ATCC BAA-672) (Erwinia carotovora subsp. atroseptica), this protein is Pyrimidine/purine nucleoside phosphorylase.